A 203-amino-acid polypeptide reads, in one-letter code: 3-isopropylmalate dehydratase small subunit (203 aa).

Belongs to the LeuD family. LeuD type 1 subfamily. In terms of assembly, heterodimer of LeuC and LeuD.

The catalysed reaction is (2R,3S)-3-isopropylmalate = (2S)-2-isopropylmalate. Its pathway is amino-acid biosynthesis; L-leucine biosynthesis; L-leucine from 3-methyl-2-oxobutanoate: step 2/4. Catalyzes the isomerization between 2-isopropylmalate and 3-isopropylmalate, via the formation of 2-isopropylmaleate. This chain is 3-isopropylmalate dehydratase small subunit, found in Phenylobacterium zucineum (strain HLK1).